Here is a 730-residue protein sequence, read N- to C-terminus: Translation initiation factor IF-2 (730 aa).

Residues 48–151 (GNGNQKQGGS…NKAKPLPEKV (104 aa)) form a disordered region. Basic and acidic residues-rich tracts occupy residues 61–77 (EQQKKAGEKKPAQDHGQ) and 89–104 (NQHDRSQGSDQQKGKA). The span at 110-123 (KPKHKGNKNKKQHQ) shows a compositional bias: basic residues. Residues 137–148 (RQPEMNKAKPLP) are compositionally biased toward basic and acidic residues. The tr-type G domain maps to 231 to 400 (ERPPVVTIMG…LLVAEVEELK (170 aa)). Residues 240–247 (GHVDHGKT) are G1. Residue 240–247 (GHVDHGKT) participates in GTP binding. Positions 265–269 (GITQH) are G2. Residues 286–289 (DTPG) form a G3 region. GTP contacts are provided by residues 286 to 290 (DTPGH) and 340 to 343 (NKMD). A G4 region spans residues 340–343 (NKMD). Residues 376–378 (SAL) form a G5 region.

Belongs to the TRAFAC class translation factor GTPase superfamily. Classic translation factor GTPase family. IF-2 subfamily.

It is found in the cytoplasm. In terms of biological role, one of the essential components for the initiation of protein synthesis. Protects formylmethionyl-tRNA from spontaneous hydrolysis and promotes its binding to the 30S ribosomal subunits. Also involved in the hydrolysis of GTP during the formation of the 70S ribosomal complex. This is Translation initiation factor IF-2 from Halalkalibacterium halodurans (strain ATCC BAA-125 / DSM 18197 / FERM 7344 / JCM 9153 / C-125) (Bacillus halodurans).